Reading from the N-terminus, the 322-residue chain is Stage V sporulation protein K (322 aa).

99 to 106 contributes to the ATP binding site; it reads GNPGTGKT.

Belongs to the CbxX/CfxQ family.

The polypeptide is Stage V sporulation protein K (spoVK) (Bacillus subtilis (strain 168)).